Consider the following 129-residue polypeptide: Glycine cleavage system H protein (129 aa).

A Lipoyl-binding domain is found at 24–106 (LLKIGVSEFA…IGEGWLVILK (83 aa)). Lysine 65 bears the N6-lipoyllysine mark.

This sequence belongs to the GcvH family. The glycine cleavage system is composed of four proteins: P, T, L and H. (R)-lipoate is required as a cofactor.

The glycine cleavage system catalyzes the degradation of glycine. The H protein shuttles the methylamine group of glycine from the P protein to the T protein. This Prochlorococcus marinus (strain MIT 9215) protein is Glycine cleavage system H protein.